A 277-amino-acid polypeptide reads, in one-letter code: MNSSGLLCDNERPRHRPFLIGVSGGTASGKSTVCAKIMELLGQNKVDHHQRKVTIVSQDSFYRVLTPEQKAKALKGQYNFDHPDAFDTEFMCQTLKDIVEGKVVEVPTYDFVTHSRLPEKICVYPADVVLFEGILVFYTQEVRDMFHMKQFVDTDSDVRLSRRVLRDMNRGRDLEQILTQYTTFVKPAFEEFCLPTKKYADVIIPRGVDNMVAINLIVQHIQDILNGDICKWQRGSVNGHNHGRSLKRGVAEHGENPSGSSSNLTKRPLLEPSTRPH.

Gly24–Thr32 contacts ATP. The substrate site is built by Asp81, Tyr109, His114, Arg163, Arg172, and Gln180. Residue Asp209 participates in ATP binding. Residues Asn241 to His277 are disordered.

It belongs to the uridine kinase family.

It carries out the reaction uridine + ATP = UMP + ADP + H(+). The catalysed reaction is cytidine + ATP = CMP + ADP + H(+). It participates in pyrimidine metabolism; CTP biosynthesis via salvage pathway; CTP from cytidine: step 1/3. The protein operates within pyrimidine metabolism; UMP biosynthesis via salvage pathway; UMP from uridine: step 1/1. In terms of biological role, phosphorylates uridine and cytidine to uridine monophosphate and cytidine monophosphate. Does not phosphorylate deoxyribonucleosides or purine ribonucleosides. Can use ATP or GTP as a phosphate donor. This is Uridine-cytidine kinase 1 (uck1) from Danio rerio (Zebrafish).